The sequence spans 1347 residues: Spermatogenesis-associated protein 31A5 (1347 aa).

The chain crosses the membrane as a helical span at residues Pro23–Leu43. Disordered stretches follow at residues Pro55–Cys87, Gly106–Thr233, Glu373–Lys397, Asp628–Gln657, Arg900–Val955, Val1084–Ser1161, and Lys1313–His1335. Basic residues predominate over residues Gly60–Arg82. The segment covering Leu165–Val178 has biased composition (polar residues). Over residues Pro198–Pro211 the composition is skewed to pro residues. Composition is skewed to polar residues over residues Pro631 to Glu651 and Leu927 to Ala948. Basic and acidic residues-rich tracts occupy residues His1108–Gly1127 and Arg1137–Glu1146.

This sequence belongs to the SPATA31 family.

The protein localises to the membrane. Its function is as follows. May play a role in spermatogenesis. In Homo sapiens (Human), this protein is Spermatogenesis-associated protein 31A5 (SPATA31A5).